Consider the following 439-residue polypeptide: MKRIATPSLTSRLLVAARSGVSPATAAIRSRSAISVRSQSTAALAQHDASHDLNNDRFPPLEPLPPAAESLPSPLPERALTSAKLAALHARLNLSPKIPLQTLARTLVDASADENPQFNNANLAFVGQTLINYHIAEWLLCKYPRLPQGILFSAMKAYAGPKPLLQIARSWGVDTAAVPGGEVDPGLLQFDALKPGVAITNFGYKRTELAYLEKFKWRRGMASRVVLDDDFGDVVRSDPKVAADLEKAMEEQDQDKTPDEEEAEMVANEQDQDVSYDRYGNPDTRAAAERAHAYFVRAVVGAIYAHCGREAAKAFVKAHIMSRTLDIAKLFEFKYPTRELAALCAREDFEPPVARLLSETGRQSRTPVFVVGIYSGSDKLGEGAASSLDHARFKAAMNALKAWYLYSPGENPRVPSDMLEEGAKPWTPAYIDMGEVISR.

Disordered stretches follow at residues 39 to 73 (QSTA…SLPS) and 247 to 282 (KAME…YGNP). The segment covering 247–257 (KAMEEQDQDKT) has biased composition (basic and acidic residues). Positions 258 to 274 (PDEEEAEMVANEQDQDV) are enriched in acidic residues.

It belongs to the ribonuclease III family. Mitochondrion-specific ribosomal protein mL44 subfamily. In terms of assembly, component of the mitochondrial large ribosomal subunit (mt-LSU). Mature N.crassa 74S mitochondrial ribosomes consist of a small (37S) and a large (54S) subunit. The 37S small subunit contains a 16S ribosomal RNA (16S mt-rRNA) and 32 different proteins. The 54S large subunit contains a 23S rRNA (23S mt-rRNA) and 42 different proteins. mL44 forms a heterodimer with mL57 and stabilizes rRNA expansion segments 1/2 at a membrane-facing protuberance close to the point of attachment of the ribosome to the translocon in the membrane.

The protein localises to the mitochondrion. Its function is as follows. Component of the mitochondrial ribosome (mitoribosome), a dedicated translation machinery responsible for the synthesis of mitochondrial genome-encoded proteins, including at least some of the essential transmembrane subunits of the mitochondrial respiratory chain. The mitoribosomes are attached to the mitochondrial inner membrane and translation products are cotranslationally integrated into the membrane. The polypeptide is Large ribosomal subunit protein mL44 (mrpl3) (Neurospora crassa (strain ATCC 24698 / 74-OR23-1A / CBS 708.71 / DSM 1257 / FGSC 987)).